Here is a 944-residue protein sequence, read N- to C-terminus: Isoleucine--tRNA ligase (944 aa).

Residues 58–68 (PYANGDIHIGH) carry the 'HIGH' region motif. Glutamate 568 is an L-isoleucyl-5'-AMP binding site. A 'KMSKS' region motif is present at residues 609–613 (KMSKS). Lysine 612 provides a ligand contact to ATP. Residues cysteine 907, cysteine 910, cysteine 927, and cysteine 930 each contribute to the Zn(2+) site.

Belongs to the class-I aminoacyl-tRNA synthetase family. IleS type 1 subfamily. As to quaternary structure, monomer. It depends on Zn(2+) as a cofactor.

The protein resides in the cytoplasm. The catalysed reaction is tRNA(Ile) + L-isoleucine + ATP = L-isoleucyl-tRNA(Ile) + AMP + diphosphate. In terms of biological role, catalyzes the attachment of isoleucine to tRNA(Ile). As IleRS can inadvertently accommodate and process structurally similar amino acids such as valine, to avoid such errors it has two additional distinct tRNA(Ile)-dependent editing activities. One activity is designated as 'pretransfer' editing and involves the hydrolysis of activated Val-AMP. The other activity is designated 'posttransfer' editing and involves deacylation of mischarged Val-tRNA(Ile). This chain is Isoleucine--tRNA ligase, found in Psychromonas ingrahamii (strain DSM 17664 / CCUG 51855 / 37).